A 491-amino-acid polypeptide reads, in one-letter code: Fibrinogen beta chain (491 aa).

A signal peptide spans M1–S30. Pyrrolidone carboxylic acid is present on Q31. Positions R44–P75 are disordered. The segment at G45–R47 is beta-chain polymerization, binding distal domain of another fibrin. The span at R47–P57 shows a compositional bias: basic and acidic residues. Residues K157–Y222 adopt a coiled-coil conformation. Disulfide bonds link C231/C316 and C241/C270. Positions N232–F488 constitute a Fibrinogen C-terminal domain. The N-linked (GlcNAc...) asparagine glycan is linked to N394. Residues C424 and C437 are joined by a disulfide bond.

Heterohexamer; disulfide linked. Contains 2 sets of 3 non-identical chains (alpha, beta and gamma). The 2 heterotrimers are in head to head conformation with the N-termini in a small central domain. Conversion of fibrinogen to fibrin is triggered by thrombin, which cleaves fibrinopeptides A and B from alpha and beta chains, and thus exposes the N-terminal polymerization sites responsible for the formation of the soft clot. The soft clot is converted into the hard clot by factor XIIIA which catalyzes the epsilon-(gamma-glutamyl)lysine cross-linking between gamma chains (stronger) and between alpha chains (weaker) of different monomers. As to expression, detected in blood plasma (at protein level).

Its subcellular location is the secreted. In terms of biological role, cleaved by the protease thrombin to yield monomers which, together with fibrinogen alpha (FGA) and fibrinogen gamma (FGG), polymerize to form an insoluble fibrin matrix. Fibrin has a major function in hemostasis as one of the primary components of blood clots. In addition, functions during the early stages of wound repair to stabilize the lesion and guide cell migration during re-epithelialization. Was originally thought to be essential for platelet aggregation, based on in vitro studies using anticoagulated blood. However subsequent studies have shown that it is not absolutely required for thrombus formation in vivo. Enhances expression of SELP in activated platelets. Maternal fibrinogen is essential for successful pregnancy. Fibrin deposition is also associated with infection, where it protects against IFNG-mediated hemorrhage. May also facilitate the antibacterial immune response via both innate and T-cell mediated pathways. This is Fibrinogen beta chain (FGB) from Homo sapiens (Human).